Reading from the N-terminus, the 360-residue chain is Phospho-N-acetylmuramoyl-pentapeptide-transferase (360 aa).

The Periplasmic portion of the chain corresponds to 1–25; it reads MLVWLAEHLVKYYSGFNVFSYLTFR. The chain crosses the membrane as a helical span at residues 26 to 46; sequence AIVSLLTALFISLWMGPRMIA. At 47–71 the chain is on the cytoplasmic side; sequence RLQKLSFGQVVRNDGPESHFSKRGT. A helical membrane pass occupies residues 72–92; the sequence is PTMGGIMILTSIVISVLLWAY. A topological domain (periplasmic) is located at residue Pro-93. The helical transmembrane segment at 94-114 threads the bilayer; that stretch reads SNPYVWCVLVVLIGYGIIGFV. Residues 115–131 lie on the Cytoplasmic side of the membrane; sequence DDYRKVVRKDTKGLIAR. Residues 132–152 form a helical membrane-spanning segment; the sequence is WKYFWMSVIALGVAFALYLVG. Residues 153-167 are Periplasmic-facing; that stretch reads KDTPATQLVVPFFKD. A helical transmembrane segment spans residues 168–188; it reads VMPQLGLFYILLSYFVIVGTG. The Cytoplasmic segment spans residues 189–198; it reads NAVNLTDGLD. Residues 199–219 form a helical membrane-spanning segment; that stretch reads GLAIMPTVFVAAGFALVAWAT. The Periplasmic portion of the chain corresponds to 220–235; it reads GNMNFANYLHIPYLRH. The helical transmembrane segment at 236–256 threads the bilayer; the sequence is AGELVIVCTAIVGAGLGFLWF. Residues 257 to 262 are Cytoplasmic-facing; it reads NTYPAQ. A helical membrane pass occupies residues 263 to 283; sequence VFMGDVGSLALGGALGIIAVL. The Periplasmic portion of the chain corresponds to 284 to 287; sequence LRQE. Residues 288–308 traverse the membrane as a helical segment; sequence FLLVIMGGVFVVETLSVILQV. Residues 309–337 are Cytoplasmic-facing; that stretch reads GSFKLRGQRIFRMAPIHHHYELKGWPEPR. A helical transmembrane segment spans residues 338–358; the sequence is VIVRFWIISLMLVLIGLATLK. The Periplasmic portion of the chain corresponds to 359 to 360; it reads VR.

Belongs to the glycosyltransferase 4 family. MraY subfamily. Requires Mg(2+) as cofactor.

The protein resides in the cell inner membrane. The catalysed reaction is UDP-N-acetyl-alpha-D-muramoyl-L-alanyl-gamma-D-glutamyl-meso-2,6-diaminopimeloyl-D-alanyl-D-alanine + di-trans,octa-cis-undecaprenyl phosphate = di-trans,octa-cis-undecaprenyl diphospho-N-acetyl-alpha-D-muramoyl-L-alanyl-D-glutamyl-meso-2,6-diaminopimeloyl-D-alanyl-D-alanine + UMP. It participates in cell wall biogenesis; peptidoglycan biosynthesis. Its function is as follows. Catalyzes the initial step of the lipid cycle reactions in the biosynthesis of the cell wall peptidoglycan: transfers peptidoglycan precursor phospho-MurNAc-pentapeptide from UDP-MurNAc-pentapeptide onto the lipid carrier undecaprenyl phosphate, yielding undecaprenyl-pyrophosphoryl-MurNAc-pentapeptide, known as lipid I. The chain is Phospho-N-acetylmuramoyl-pentapeptide-transferase from Salmonella gallinarum (strain 287/91 / NCTC 13346).